The following is a 397-amino-acid chain: Acetyl-CoA acetyltransferase, cytosolic (397 aa).

N-acetylmethionine is present on methionine 1. The Acyl-thioester intermediate role is filled by cysteine 92. Residue lysine 200 is modified to N6-acetyllysine. Residues arginine 223 and serine 226 each coordinate CoA. N6-acetyllysine occurs at positions 233 and 235. Residue serine 252 participates in CoA binding. Cysteine 383 functions as the Proton donor/acceptor in the catalytic mechanism.

The protein belongs to the thiolase-like superfamily. Thiolase family. As to quaternary structure, homotetramer.

Its subcellular location is the cytoplasm. The protein localises to the cytosol. The catalysed reaction is 2 acetyl-CoA = acetoacetyl-CoA + CoA. Its pathway is lipid metabolism; fatty acid metabolism. Involved in the biosynthetic pathway of cholesterol. The polypeptide is Acetyl-CoA acetyltransferase, cytosolic (Acat2) (Rattus norvegicus (Rat)).